A 243-amino-acid chain; its full sequence is DNA repair protein RecO (243 aa).

It belongs to the RecO family.

Involved in DNA repair and RecF pathway recombination. The protein is DNA repair protein RecO of Phenylobacterium zucineum (strain HLK1).